The primary structure comprises 86 residues: Photosystem I reaction center subunit PsaK (86 aa).

A helical membrane pass occupies residues proline 15 to alanine 34.

This sequence belongs to the PsaG/PsaK family.

It localises to the plastid. The protein resides in the chloroplast thylakoid membrane. In Pyropia yezoensis (Susabi-nori), this protein is Photosystem I reaction center subunit PsaK.